The following is a 160-amino-acid chain: MPSFDIVSEIDTVELRNAVDNSNRELSTRFDFRNVQASFELVEQTVKVSAEGDFQLKQMRDILRGHLAKRGVDANSMDAKTAEQTGKNWHQDIVFLQGIETPMAKKIVKLIKDAKLKVQASIQGDKVRVTGKKRDDLQETIAAIRTAELGQPFQFNNFRD.

The protein belongs to the YajQ family.

Functionally, nucleotide-binding protein. This is Nucleotide-binding protein VV1636 from Vibrio vulnificus (strain YJ016).